The chain runs to 265 residues: Cytochrome c oxidase subunit 3 (265 aa).

6 consecutive transmembrane segments (helical) span residues 16–36 (PWPISGSLGALATTVGGVMYM), 41–61 (GGATLLSLGLIFLLYTMFVWW), 84–104 (YGSILFIVSEVMSFFLFFWAS), 162–182 (AVYALVATVLLALVSTGFQGM), 200–220 (FLLATGFHGFHVIIGTLFLIV), and 242–262 (AWYWHFVDVVRLFPFVSIYWW).

Belongs to the cytochrome c oxidase subunit 3 family. As to quaternary structure, component of the cytochrome c oxidase (complex IV, CIV), a multisubunit enzyme composed of a catalytic core of 3 subunits and several supernumerary subunits. The complex exists as a monomer or a dimer and forms supercomplexes (SCs) in the inner mitochondrial membrane with ubiquinol-cytochrome c oxidoreductase (cytochrome b-c1 complex, complex III, CIII).

Its subcellular location is the mitochondrion inner membrane. The catalysed reaction is 4 Fe(II)-[cytochrome c] + O2 + 8 H(+)(in) = 4 Fe(III)-[cytochrome c] + 2 H2O + 4 H(+)(out). Functionally, component of the cytochrome c oxidase, the last enzyme in the mitochondrial electron transport chain which drives oxidative phosphorylation. The respiratory chain contains 3 multisubunit complexes succinate dehydrogenase (complex II, CII), ubiquinol-cytochrome c oxidoreductase (cytochrome b-c1 complex, complex III, CIII) and cytochrome c oxidase (complex IV, CIV), that cooperate to transfer electrons derived from NADH and succinate to molecular oxygen, creating an electrochemical gradient over the inner membrane that drives transmembrane transport and the ATP synthase. Cytochrome c oxidase is the component of the respiratory chain that catalyzes the reduction of oxygen to water. Electrons originating from reduced cytochrome c in the intermembrane space (IMS) are transferred via the dinuclear copper A center (CU(A)) of subunit 2 and heme A of subunit 1 to the active site in subunit 1, a binuclear center (BNC) formed by heme A3 and copper B (CU(B)). The BNC reduces molecular oxygen to 2 water molecules using 4 electrons from cytochrome c in the IMS and 4 protons from the mitochondrial matrix. In Zea mays (Maize), this protein is Cytochrome c oxidase subunit 3 (COX3).